A 597-amino-acid chain; its full sequence is Leishmanolysin (597 aa).

An N-terminal signal peptide occupies residues 1 to 39 (MSVDSSSTHRHRCVAARLVPLAAAGAAVTVAVGTAAAWA). The propeptide at 40-99 (HAGAVQHRCIHDAMQARVRQSVAAQRMAPSAVSAVGLPHVTLDAGNTAAGADPSTGTANV) is activation peptide. 2 disulfides stabilise this stretch: C124-C141 and C190-C229. H263 is a Zn(2+) binding site. E264 is an active-site residue. H267 contributes to the Zn(2+) binding site. The N-linked (GlcNAc...) asparagine glycan is linked to N299. Cystine bridges form between C313-C383, C390-C452, C403-C422, C412-C486, C463-C507, C512-C562, and C532-C555. Residue H332 coordinates Zn(2+). The N-linked (GlcNAc...) asparagine glycan is linked to N404. N574 carries GPI-anchor amidated asparagine lipidation. Positions 575 to 597 (AAGRRGPRAATALVVAALLAVAL) are cleaved as a propeptide — removed in mature form.

Belongs to the peptidase M8 family. Zn(2+) serves as cofactor.

It is found in the cell membrane. The catalysed reaction is Preference for hydrophobic residues at P1 and P1' and basic residues at P2' and P3'. A model nonapeptide is cleaved at -Ala-Tyr-|-Leu-Lys-Lys-.. Functionally, has an integral role during the infection of macrophages in the mammalian host. This chain is Leishmanolysin (gp63), found in Leishmania amazonensis.